Here is a 212-residue protein sequence, read N- to C-terminus: Thymidylate kinase (212 aa).

7–14 (GIEGSGKS) contacts ATP.

This sequence belongs to the thymidylate kinase family.

It carries out the reaction dTMP + ATP = dTDP + ADP. Phosphorylation of dTMP to form dTDP in both de novo and salvage pathways of dTTP synthesis. This is Thymidylate kinase from Oleidesulfovibrio alaskensis (strain ATCC BAA-1058 / DSM 17464 / G20) (Desulfovibrio alaskensis).